The following is a 386-amino-acid chain: Succinate--CoA ligase [ADP-forming] subunit beta (386 aa).

The ATP-grasp domain occupies 9–235 (KELFAKHDVP…REEEDPLESA (227 aa)). ATP contacts are provided by residues Lys-44, 51 to 53 (GRG), Ala-93, and Glu-98. Mg(2+) is bound by residues Asn-190 and Asp-204. Substrate is bound by residues Asn-255 and 317–319 (GIT).

Belongs to the succinate/malate CoA ligase beta subunit family. As to quaternary structure, heterotetramer of two alpha and two beta subunits. Mg(2+) serves as cofactor.

It catalyses the reaction succinate + ATP + CoA = succinyl-CoA + ADP + phosphate. The catalysed reaction is GTP + succinate + CoA = succinyl-CoA + GDP + phosphate. The protein operates within carbohydrate metabolism; tricarboxylic acid cycle; succinate from succinyl-CoA (ligase route): step 1/1. Succinyl-CoA synthetase functions in the citric acid cycle (TCA), coupling the hydrolysis of succinyl-CoA to the synthesis of either ATP or GTP and thus represents the only step of substrate-level phosphorylation in the TCA. The beta subunit provides nucleotide specificity of the enzyme and binds the substrate succinate, while the binding sites for coenzyme A and phosphate are found in the alpha subunit. This is Succinate--CoA ligase [ADP-forming] subunit beta from Nocardioides sp. (strain ATCC BAA-499 / JS614).